Here is a 375-residue protein sequence, read N- to C-terminus: Erythronate-4-phosphate dehydrogenase (375 aa).

Ser45 and Thr66 together coordinate substrate. Residues Asp146, Thr175, 206-208 (ASR), and Asp232 contribute to the NAD(+) site. Residue Arg208 is part of the active site. Glu237 is a catalytic residue. The Proton donor role is filled by His254. Gly257 serves as a coordination point for NAD(+). Tyr258 lines the substrate pocket.

This sequence belongs to the D-isomer specific 2-hydroxyacid dehydrogenase family. PdxB subfamily. Homodimer.

It localises to the cytoplasm. It catalyses the reaction 4-phospho-D-erythronate + NAD(+) = (R)-3-hydroxy-2-oxo-4-phosphooxybutanoate + NADH + H(+). It participates in cofactor biosynthesis; pyridoxine 5'-phosphate biosynthesis; pyridoxine 5'-phosphate from D-erythrose 4-phosphate: step 2/5. Its function is as follows. Catalyzes the oxidation of erythronate-4-phosphate to 3-hydroxy-2-oxo-4-phosphonooxybutanoate. The chain is Erythronate-4-phosphate dehydrogenase from Proteus mirabilis (strain HI4320).